The sequence spans 329 residues: Ig gamma-2C chain C region (329 aa).

The CH1 stretch occupies residues 1 to 97; it reads ARTTAPSVYP…ATKSNLIKRI (97 aa). Cys27 and Cys82 form a disulfide bridge. The hinge stretch occupies residues 98–113; it reads EPRRPKPRPPTDICSC. The segment at 114–222 is CH2; sequence DDNLGRPSVF…PIEKTISKPR (109 aa). Cystine bridges form between Cys143–Cys203 and Cys249–Cys307. A CH3 region spans residues 223 to 329; the sequence is GKARTPQVYT…QKNLSRSPGK (107 aa).

The chain is Ig gamma-2C chain C region from Rattus norvegicus (Rat).